Reading from the N-terminus, the 49-residue chain is Large ribosomal subunit protein bL33B (49 aa).

This sequence belongs to the bacterial ribosomal protein bL33 family.

This is Large ribosomal subunit protein bL33B from Limosilactobacillus fermentum (strain NBRC 3956 / LMG 18251) (Lactobacillus fermentum).